The following is a 156-amino-acid chain: Persephin (156 aa).

The N-terminal stretch at 1-21 is a signal peptide; the sequence is MAVGKFLLGSLLLLSLQLGQG. 3 disulfide bridges follow: Cys-66–Cys-124, Cys-93–Cys-152, and Cys-97–Cys-154.

It belongs to the TGF-beta family. GDNF subfamily. Homodimer; disulfide-linked. Interacts with GFRA4 coreceptor and RET: forms a 2:2:2 ternary complex composed of PSPN ligand, GFRA4 and RET receptor.

It is found in the secreted. Its function is as follows. Growth factor that exhibits neurotrophic activity on mesencephalic dopaminergic and motor neurons. Acts by binding to its coreceptor, GFRA4, leading to autophosphorylation and activation of the RET receptor. The polypeptide is Persephin (Homo sapiens (Human)).